A 412-amino-acid polypeptide reads, in one-letter code: Peptidase T (412 aa).

Position 78 (H78) interacts with Zn(2+). Residue D80 is part of the active site. D140 contributes to the Zn(2+) binding site. Residue E174 is the Proton acceptor of the active site. Positions 175, 197, and 379 each coordinate Zn(2+).

This sequence belongs to the peptidase M20B family. Zn(2+) serves as cofactor.

It localises to the cytoplasm. The enzyme catalyses Release of the N-terminal residue from a tripeptide.. Cleaves the N-terminal amino acid of tripeptides. The polypeptide is Peptidase T (Staphylococcus epidermidis (strain ATCC 12228 / FDA PCI 1200)).